The chain runs to 264 residues: Thymidylate synthase (264 aa).

Arg21 is a dUMP binding site. His51 contributes to the (6R)-5,10-methylene-5,6,7,8-tetrahydrofolate binding site. Position 126–127 (126–127 (RR)) interacts with dUMP. Residue Cys146 is the Nucleophile of the active site. Residues 166–169 (RSAD), Asn177, and 207–209 (HLY) each bind dUMP. Asp169 serves as a coordination point for (6R)-5,10-methylene-5,6,7,8-tetrahydrofolate. Ser263 is a binding site for (6R)-5,10-methylene-5,6,7,8-tetrahydrofolate.

This sequence belongs to the thymidylate synthase family. Bacterial-type ThyA subfamily. In terms of assembly, homodimer.

It is found in the cytoplasm. The enzyme catalyses dUMP + (6R)-5,10-methylene-5,6,7,8-tetrahydrofolate = 7,8-dihydrofolate + dTMP. It participates in pyrimidine metabolism; dTTP biosynthesis. Catalyzes the reductive methylation of 2'-deoxyuridine-5'-monophosphate (dUMP) to 2'-deoxythymidine-5'-monophosphate (dTMP) while utilizing 5,10-methylenetetrahydrofolate (mTHF) as the methyl donor and reductant in the reaction, yielding dihydrofolate (DHF) as a by-product. This enzymatic reaction provides an intracellular de novo source of dTMP, an essential precursor for DNA biosynthesis. In Neisseria meningitidis serogroup A / serotype 4A (strain DSM 15465 / Z2491), this protein is Thymidylate synthase.